The sequence spans 408 residues: MVVLALTLLVGSVAVFSLGSLLWVVGKHFWTEHIPEGITHPWRLRILSCLFHLTMTWGMIFEKLGLCYAPQFASFLHDLKPLKRDPDVVVKDLHFGTIPVKLYKPKKPSSIPRLGIIFFHGGGTIIGSLRTHNSICLRLSKECDSVVVSVGYRKSPMYKYPVMKDDCVVATTHFLESLDVYGVDPARVVTCGDSVGGTAATVTSQMLVHRPDLPRIKAQILIYPLLQLIDFGSPSYQQNRNIPLLSWDLAFYCFCCHLDVNISWKSVVKNGMHLPPDVWEKYRKWLGAENIPERFKNRGYKSIPWGPVNNDAYQEIKRSLNYTCSPLISEDSIVSQLPETCIVSCEYDLLRDHSLLYKKRLEDLGVPVTWHHMEDGFHGVLSALDYGLLSFPCASRIMDLIIQFIRKF.

3 helical membrane passes run 2–22 (VVLA…GSLL), 46–66 (ILSC…KLGL), and 109–129 (SSIP…IGSL). An Involved in the stabilization of the negatively charged intermediate by the formation of the oxyanion hole motif is present at residues 120–122 (HGG). Ser194 is a catalytic residue. Asn321 carries N-linked (GlcNAc...) asparagine glycosylation. Residues Asp348 and His378 contribute to the active site.

This sequence belongs to the 'GDXG' lipolytic enzyme family.

It is found in the membrane. The chain is Arylacetamide deacetylase-like 3 (Aadacl3) from Mus musculus (Mouse).